Reading from the N-terminus, the 430-residue chain is Trigger factor (430 aa).

The PPIase FKBP-type domain occupies 163-248 (GNIAIIDFKG…IKDIKVKELP (86 aa)).

It belongs to the FKBP-type PPIase family. Tig subfamily.

It localises to the cytoplasm. The catalysed reaction is [protein]-peptidylproline (omega=180) = [protein]-peptidylproline (omega=0). Involved in protein export. Acts as a chaperone by maintaining the newly synthesized protein in an open conformation. Functions as a peptidyl-prolyl cis-trans isomerase. This chain is Trigger factor, found in Clostridium botulinum (strain ATCC 19397 / Type A).